The sequence spans 21 residues: Cardiotoxin-like basic polypeptide ah (21 aa).

This sequence belongs to the three-finger toxin family. Short-chain subfamily. Orphan group XV sub-subfamily. Contains 4 disulfide bonds. In terms of tissue distribution, expressed by the venom gland.

It is found in the secreted. It localises to the target cell membrane. Has hemolytic activity under low-lecithin conditions. Has low cytotoxic activity. Inhibits the expression of VEGF and bFGF in human non-small-cell lung cancer cell line NCI-H1299 in a dose-dependent manner. The polypeptide is Cardiotoxin-like basic polypeptide ah (Naja atra (Chinese cobra)).